Consider the following 237-residue polypeptide: Lipoprotein-releasing system ATP-binding protein LolD (237 aa).

The ABC transporter domain occupies 8–236 (ISVTDLRKTF…EAIKKSVKTA (229 aa)). 40-47 (GKSGSGKS) is a binding site for ATP.

This sequence belongs to the ABC transporter superfamily. Lipoprotein translocase (TC 3.A.1.125) family. As to quaternary structure, the complex is composed of two ATP-binding proteins (LolD) and two transmembrane proteins (LolC and LolE).

It is found in the cell inner membrane. In terms of biological role, part of the ABC transporter complex LolCDE involved in the translocation of mature outer membrane-directed lipoproteins, from the inner membrane to the periplasmic chaperone, LolA. Responsible for the formation of the LolA-lipoprotein complex in an ATP-dependent manner. This is Lipoprotein-releasing system ATP-binding protein LolD from Leptospira interrogans serogroup Icterohaemorrhagiae serovar Lai (strain 56601).